Reading from the N-terminus, the 357-residue chain is Phosphoribosylformylglycinamidine cyclo-ligase (357 aa).

This sequence belongs to the AIR synthase family.

Its subcellular location is the cytoplasm. The catalysed reaction is 2-formamido-N(1)-(5-O-phospho-beta-D-ribosyl)acetamidine + ATP = 5-amino-1-(5-phospho-beta-D-ribosyl)imidazole + ADP + phosphate + H(+). It functions in the pathway purine metabolism; IMP biosynthesis via de novo pathway; 5-amino-1-(5-phospho-D-ribosyl)imidazole from N(2)-formyl-N(1)-(5-phospho-D-ribosyl)glycinamide: step 2/2. This Rhodopseudomonas palustris (strain BisB18) protein is Phosphoribosylformylglycinamidine cyclo-ligase.